Consider the following 187-residue polypeptide: Peptidyl-tRNA hydrolase (187 aa).

Tyrosine 14 contacts tRNA. Histidine 19 functions as the Proton acceptor in the catalytic mechanism. The tRNA site is built by phenylalanine 60 and asparagine 62.

It belongs to the PTH family. Monomer.

The protein resides in the cytoplasm. The enzyme catalyses an N-acyl-L-alpha-aminoacyl-tRNA + H2O = an N-acyl-L-amino acid + a tRNA + H(+). Its function is as follows. Hydrolyzes ribosome-free peptidyl-tRNAs (with 1 or more amino acids incorporated), which drop off the ribosome during protein synthesis, or as a result of ribosome stalling. Functionally, catalyzes the release of premature peptidyl moieties from peptidyl-tRNA molecules trapped in stalled 50S ribosomal subunits, and thus maintains levels of free tRNAs and 50S ribosomes. The polypeptide is Peptidyl-tRNA hydrolase (Pseudothermotoga lettingae (strain ATCC BAA-301 / DSM 14385 / NBRC 107922 / TMO) (Thermotoga lettingae)).